Consider the following 428-residue polypeptide: Enolase (428 aa).

(2R)-2-phosphoglycerate is bound at residue Gln163. Glu205 functions as the Proton donor in the catalytic mechanism. 3 residues coordinate Mg(2+): Asp242, Glu285, and Asp312. The (2R)-2-phosphoglycerate site is built by Lys337, Arg366, Ser367, and Lys388. The Proton acceptor role is filled by Lys337.

It belongs to the enolase family. Requires Mg(2+) as cofactor.

Its subcellular location is the cytoplasm. The protein localises to the secreted. The protein resides in the cell surface. The catalysed reaction is (2R)-2-phosphoglycerate = phosphoenolpyruvate + H2O. It functions in the pathway carbohydrate degradation; glycolysis; pyruvate from D-glyceraldehyde 3-phosphate: step 4/5. Catalyzes the reversible conversion of 2-phosphoglycerate (2-PG) into phosphoenolpyruvate (PEP). It is essential for the degradation of carbohydrates via glycolysis. In Carboxydothermus hydrogenoformans (strain ATCC BAA-161 / DSM 6008 / Z-2901), this protein is Enolase.